Consider the following 143-residue polypeptide: Large ribosomal subunit protein uL13 (143 aa).

Belongs to the universal ribosomal protein uL13 family. Part of the 50S ribosomal subunit.

This protein is one of the early assembly proteins of the 50S ribosomal subunit, although it is not seen to bind rRNA by itself. It is important during the early stages of 50S assembly. In Coprothermobacter proteolyticus (strain ATCC 35245 / DSM 5265 / OCM 4 / BT), this protein is Large ribosomal subunit protein uL13.